The following is a 145-amino-acid chain: Hemoglobin fetal subunit beta (145 aa).

One can recognise a Globin domain in the interval 1-145; that stretch reads MLSAEEKAAV…VANALAHRYH (145 aa). Residues H62 and H91 each contribute to the heme b site.

This sequence belongs to the globin family. In terms of assembly, heterotetramer of two alpha chains and two beta chains. In terms of tissue distribution, red blood cells.

Its function is as follows. Involved in oxygen transport from the lung to the various peripheral tissues. The protein is Hemoglobin fetal subunit beta of Bos taurus (Bovine).